The sequence spans 250 residues: MSYQVEVCIDNIESLHNALEGGATRIELCSSLALGGLTPSYGFMTLAAKLSTVPIYAMIRPRQGDFLYSDDEFAIMQQDILSAQQAGLQGVVFGLLTADGDIDVARTRILVELAHSLQLGVTFHRAFDQCREPFAALEQIIDLGCERILTSGLAASAPLGKEILTQLVAHSQSRLAIMAGAGVSPVNVADLALTTGVKEVHLSGKSTRPSKMTFIASDSKMGAADQDDFIIPITHTATIRNTVLALKSIS.

This sequence belongs to the CutC family.

Its subcellular location is the cytoplasm. The protein is PF03932 family protein CutC of Vibrio vulnificus (strain CMCP6).